Reading from the N-terminus, the 286-residue chain is Bifunctional protein FolD (286 aa).

NADP(+) is bound by residues 166-168 (GAS) and Ile-232.

Belongs to the tetrahydrofolate dehydrogenase/cyclohydrolase family. In terms of assembly, homodimer.

The enzyme catalyses (6R)-5,10-methylene-5,6,7,8-tetrahydrofolate + NADP(+) = (6R)-5,10-methenyltetrahydrofolate + NADPH. The catalysed reaction is (6R)-5,10-methenyltetrahydrofolate + H2O = (6R)-10-formyltetrahydrofolate + H(+). Its pathway is one-carbon metabolism; tetrahydrofolate interconversion. Its function is as follows. Catalyzes the oxidation of 5,10-methylenetetrahydrofolate to 5,10-methenyltetrahydrofolate and then the hydrolysis of 5,10-methenyltetrahydrofolate to 10-formyltetrahydrofolate. This is Bifunctional protein FolD from Blochmanniella pennsylvanica (strain BPEN).